A 475-amino-acid chain; its full sequence is Tetratricopeptide repeat protein 29 (475 aa).

7 TPR repeats span residues 92–131 (DALR…EDAE), 136–173 (FEDV…AQLI), 182–215 (AEAH…TQGR), 234–267 (LRTY…AKEG), 274–307 (AEAS…STDL), 314–347 (GRGY…ARNN), and 354–387 (VRAS…TVEL). The interval 437–475 (IEPDPVTEEFRGSTVEAVSQNSERLEELSRFPGDQKNET) is disordered. Over residues 459 to 475 (ERLEELSRFPGDQKNET) the composition is skewed to basic and acidic residues.

In terms of tissue distribution, expressed in spermatozoa (at protein level).

It is found in the cytoplasm. Its subcellular location is the cytoskeleton. The protein resides in the flagellum axoneme. In terms of biological role, axonemal protein which is implicated in axonemal and/or peri-axonemal structure assembly and regulates flagellum assembly and beating and therefore sperm motility. This Homo sapiens (Human) protein is Tetratricopeptide repeat protein 29 (TTC29).